The chain runs to 684 residues: Zinc finger BED domain-containing protein RICESLEEPER 4 (684 aa).

The BED-type zinc finger occupies 54-113 (KRKSAIWEHFTLVDVSDGCKRASCIHCNQSLAYSSGSKNSGTSHLTRHIAEWCRVLKDRQ). Positions 77, 80, 101, and 106 each coordinate Zn(2+). Residues 595-680 (ELELYLEEAL…EALLCAKDWL (86 aa)) are HATC (Hobo-Ac-Tam3) domain.

Homodimer.

It is found in the nucleus. Functionally, transposase-like protein that is essential for plant growth and development. May regulate global gene expression by recruiting other cellular factors. The sequence is that of Zinc finger BED domain-containing protein RICESLEEPER 4 from Oryza sativa subsp. japonica (Rice).